The chain runs to 324 residues: UDP-N-acetylenolpyruvoylglucosamine reductase (324 aa).

The 168-residue stretch at 36-203 (FRAGGLAELM…THAIFEGYAE (168 aa)) folds into the FAD-binding PCMH-type domain. Residue arginine 183 is part of the active site. Residue serine 232 is the Proton donor of the active site. Residue glutamate 302 is part of the active site.

Belongs to the MurB family. FAD serves as cofactor.

It is found in the cytoplasm. The catalysed reaction is UDP-N-acetyl-alpha-D-muramate + NADP(+) = UDP-N-acetyl-3-O-(1-carboxyvinyl)-alpha-D-glucosamine + NADPH + H(+). It participates in cell wall biogenesis; peptidoglycan biosynthesis. Cell wall formation. This Rhizobium meliloti (strain 1021) (Ensifer meliloti) protein is UDP-N-acetylenolpyruvoylglucosamine reductase.